Here is a 753-residue protein sequence, read N- to C-terminus: Nibrin (753 aa).

One can recognise an FHA domain in the interval 22-81 (YVVGRKNCAFLIQDDQSISRSHAVLTVSRPETTHSQSVSVPVLTIKDTSKYGTFVNGSKL). 2 BRCT domains span residues 101-191 (SKFR…PTPE) and 221-311 (GKTF…LAVI). Ser274 carries the post-translational modification Phosphoserine. Position 343 is a phosphoserine; by ATM (Ser343). The interval 442-606 (RECTPRQQSN…NTKQREENEM (165 aa)) is disordered. Over residues 446–455 (PRQQSNSITN) the composition is skewed to polar residues. The Nuclear localization signal motif lies at 461-467 (RKRERAE). The segment covering 490–500 (CTESSASSAWN) has biased composition (polar residues). The segment covering 517 to 528 (ESGELASDKTDI) has biased composition (basic and acidic residues). Residues 568–577 (QTANGDQEAQ) show a composition bias toward polar residues. A compositionally biased stretch (basic and acidic residues) spans 585–606 (CLETKGSRTEEGNTKQREENEM). The short motif at 739 to 748 (ADDLFRYDPN) is the FxF/Y motif element.

This sequence belongs to the Nibrin family. In terms of assembly, component of the MRN complex composed of two heterodimers RAD50 and mre11 associated with a single NBN.

The protein resides in the nucleus. The protein localises to the chromosome. Its subcellular location is the PML body. It is found in the telomere. Functionally, component of the MRN complex, which plays a central role in double-strand break (DSB) repair, DNA recombination, maintenance of telomere integrity and meiosis. The MRN complex is involved in the repair of DNA double-strand breaks (DSBs) via homologous recombination (HR), an error-free mechanism which primarily occurs during S and G2 phases. The complex (1) mediates the end resection of damaged DNA, which generates proper single-stranded DNA, a key initial steps in HR, and is (2) required for the recruitment of other repair factors and efficient activation of ATM and ATR upon DNA damage. The MRN complex possesses single-strand endonuclease activity and double-strand-specific 3'-5' exonuclease activity, which are provided by MRE11, to initiate end resection, which is required for single-strand invasion and recombination. Within the MRN complex, NBN acts as a protein-protein adapter, which specifically recognizes and binds phosphorylated proteins, promoting their recruitment to DNA damage sites. Recruits MRE11 and RAD50 components of the MRN complex to DSBs in response to DNA damage. Promotes the recruitment of PI3/PI4-kinase family members ATM, ATR, and probably DNA-PKcs to the DNA damage sites, activating their functions. Mediates the recruitment of phosphorylated RBBP8/CtIP to DSBs, leading to cooperation between the MRN complex and RBBP8/CtIP to initiate end resection. The MRN complex and rbbp8/CtIP are also required for chromosome alignment during metaphase. The protein is Nibrin (NBN) of Gallus gallus (Chicken).